The primary structure comprises 131 residues: Large ribosomal subunit protein bL12 (131 aa).

Belongs to the bacterial ribosomal protein bL12 family. In terms of assembly, homodimer. Part of the ribosomal stalk of the 50S ribosomal subunit. Forms a multimeric L10(L12)X complex, where L10 forms an elongated spine to which 2 to 4 L12 dimers bind in a sequential fashion. Binds GTP-bound translation factors.

In terms of biological role, forms part of the ribosomal stalk which helps the ribosome interact with GTP-bound translation factors. Is thus essential for accurate translation. The polypeptide is Large ribosomal subunit protein bL12 (Prochlorococcus marinus (strain MIT 9515)).